A 464-amino-acid polypeptide reads, in one-letter code: Soluble pyridine nucleotide transhydrogenase (464 aa).

FAD is bound at residue 35-44 (DSRRQVGGNC).

The protein belongs to the class-I pyridine nucleotide-disulfide oxidoreductase family. FAD serves as cofactor.

Its subcellular location is the cytoplasm. The catalysed reaction is NAD(+) + NADPH = NADH + NADP(+). In terms of biological role, conversion of NADPH, generated by peripheral catabolic pathways, to NADH, which can enter the respiratory chain for energy generation. The chain is Soluble pyridine nucleotide transhydrogenase from Pseudomonas fluorescens (strain SBW25).